A 349-amino-acid polypeptide reads, in one-letter code: Dihydroorotase (349 aa).

Residues histidine 17 and histidine 19 each coordinate Zn(2+). Residues 19-21 and asparagine 45 contribute to the substrate site; that span reads HLR. Residues lysine 105, histidine 142, and histidine 180 each contribute to the Zn(2+) site. Lysine 105 carries the N6-carboxylysine modification. Histidine 142 is a substrate binding site. A substrate-binding site is contributed by leucine 225. Aspartate 253 contributes to the Zn(2+) binding site. Aspartate 253 is a catalytic residue. Histidine 257 and alanine 269 together coordinate substrate.

The protein belongs to the metallo-dependent hydrolases superfamily. DHOase family. Class II DHOase subfamily. As to quaternary structure, homodimer. The cofactor is Zn(2+).

It catalyses the reaction (S)-dihydroorotate + H2O = N-carbamoyl-L-aspartate + H(+). It participates in pyrimidine metabolism; UMP biosynthesis via de novo pathway; (S)-dihydroorotate from bicarbonate: step 3/3. In terms of biological role, catalyzes the reversible cyclization of carbamoyl aspartate to dihydroorotate. This is Dihydroorotase from Nitrosomonas europaea (strain ATCC 19718 / CIP 103999 / KCTC 2705 / NBRC 14298).